Here is a 602-residue protein sequence, read N- to C-terminus: NAD-reducing hydrogenase HoxS subunit alpha (602 aa).

NAD(+) is bound at residue 219–228 (GRGGAGFSTG). 332-379 (GAGAYICGDESALIESCEGKRGTPRVKPPFPVQQGYLGKPTSVNNVET) contacts FMN. Positions 499, 502, 505, and 545 each coordinate [4Fe-4S] cluster.

This sequence belongs to the complex I 51 kDa subunit family. In terms of assembly, tetramer of an alpha and a gamma subunits (flavin-containing dimer), and a delta and a nickel-containing beta subunit (hydrogenase dimer). The cofactor is FMN. [4Fe-4S] cluster serves as cofactor.

The protein resides in the cytoplasm. The catalysed reaction is H2 + NAD(+) = NADH + H(+). Its function is as follows. Subunits alpha and gamma of HoxS constitute an NADH--oxidoreductase. This chain is NAD-reducing hydrogenase HoxS subunit alpha (hoxF), found in Cupriavidus necator (strain ATCC 17699 / DSM 428 / KCTC 22496 / NCIMB 10442 / H16 / Stanier 337) (Ralstonia eutropha).